The primary structure comprises 415 residues: Serine hydroxymethyltransferase (415 aa).

(6S)-5,6,7,8-tetrahydrofolate is bound by residues Leu-117 and 121 to 123; that span reads GHL. Lys-226 bears the N6-(pyridoxal phosphate)lysine mark. Glu-241 contacts (6S)-5,6,7,8-tetrahydrofolate.

This sequence belongs to the SHMT family. As to quaternary structure, homodimer. Requires pyridoxal 5'-phosphate as cofactor.

The protein resides in the cytoplasm. The enzyme catalyses (6R)-5,10-methylene-5,6,7,8-tetrahydrofolate + glycine + H2O = (6S)-5,6,7,8-tetrahydrofolate + L-serine. The protein operates within one-carbon metabolism; tetrahydrofolate interconversion. It functions in the pathway amino-acid biosynthesis; glycine biosynthesis; glycine from L-serine: step 1/1. Catalyzes the reversible interconversion of serine and glycine with tetrahydrofolate (THF) serving as the one-carbon carrier. This reaction serves as the major source of one-carbon groups required for the biosynthesis of purines, thymidylate, methionine, and other important biomolecules. Also exhibits THF-independent aldolase activity toward beta-hydroxyamino acids, producing glycine and aldehydes, via a retro-aldol mechanism. In Bacillus licheniformis (strain ATCC 14580 / DSM 13 / JCM 2505 / CCUG 7422 / NBRC 12200 / NCIMB 9375 / NCTC 10341 / NRRL NRS-1264 / Gibson 46), this protein is Serine hydroxymethyltransferase.